A 58-amino-acid chain; its full sequence is DNA-directed RNA polymerases I, II, and III subunit RPABC4 (58 aa).

4 residues coordinate Zn(2+): Cys19, Cys22, Cys36, and Cys39. A C4-type zinc finger spans residues 19-39; it reads CGECHTENEIKSRDPIRCREC.

It belongs to the archaeal Rpo12/eukaryotic RPC10 RNA polymerase subunit family. Component of the RNA polymerase I (Pol I), RNA polymerase II (Pol II) and RNA polymerase III (Pol III) complexes consisting of at least 13, 12 and 17 subunits, respectively. Pol I complex consists of a ten-subunit catalytic core composed of POLR1A/RPA1, POLR1B/RPA2, POLR1C/RPAC1, POLR1D/RPAC2, POLR1H/RPA12, POLR2E/RPABC1, POLR2F/RPABC2, POLR2H/RPABC3, POLR2K/RPABC4 and POLR2L/RPABC5; a mobile stalk subunit POLR1F/RPA43 protruding from the core and additional subunits homologous to general transcription factors POLR1E/RPA49 and POLR1G/RPA34. Part of Pol I pre-initiation complex (PIC), in which Pol I core assembles with RRN3 and promoter-bound UTBF and SL1/TIF-IB complex. Pol II complex contains a ten-subunit catalytic core composed of POLR2A/RPB1, POLR2B/RPB2, POLR2C/RPB3, POLR2I/RPB9, POLR2J/RPB11, POLR2E/RPABC1, POLR2F/RPABC2, POLR2H/RPABC3, POLR2K/RPABC4 and POLR2L/RPABC5 and a mobile stalk composed of two subunits POLR2D/RPB4 and POLR2G/RPB7. Part of Pol II(G) complex, in which Pol II core associates with an additional subunit POLR2M; unlike conventional Pol II, Pol II(G) functions as a transcriptional repressor. Part of TBP-based Pol II pre-initiation complex (PIC), in which Pol II core assembles with general transcription factors and other specific initiation factors including GTF2E1, GTF2E2, GTF2F1, GTF2F2, TCEA1, ERCC2, ERCC3, GTF2H2, GTF2H3, GTF2H4, GTF2H5, GTF2A1, GTF2A2, GTF2B and TBP; this large multi-subunit PIC complex mediates DNA unwinding and targets Pol II core to the transcription start site where the first phosphodiester bond forms. Pol III complex consists of a ten-subunit catalytic core composed of POLR3A/RPC1, POLR3B/RPC2, POLR1C/RPAC1, POLR1D/RPAC2, POLR3K/RPC10, POLR2E/RPABC1, POLR2F/RPABC2, POLR2H/RPABC3, POLR2K/RPABC4 and POLR2L/RPABC5; a mobile stalk composed of two subunits POLR3H/RPC8 and CRCP/RPC9, protruding from the core and functioning primarily in transcription initiation; and additional subunits homologous to general transcription factors of the RNA polymerase II machinery, POLR3C/RPC3-POLR3F/RPC6-POLR3G/RPC7 heterotrimer required for transcription initiation and POLR3D/RPC4-POLR3E/RPC5 heterodimer involved in both transcription initiation and termination.

It is found in the nucleus. Its subcellular location is the nucleolus. Its function is as follows. DNA-dependent RNA polymerase catalyzes the transcription of DNA into RNA using the four ribonucleoside triphosphates as substrates. Common component of RNA polymerases I, II and III which synthesize ribosomal RNA precursors, mRNA precursors and many functional non-coding RNAs, and a small RNAs, such as 5S rRNA and tRNAs, respectively. In Bos taurus (Bovine), this protein is DNA-directed RNA polymerases I, II, and III subunit RPABC4 (POLR2K).